A 413-amino-acid polypeptide reads, in one-letter code: Coiled-coil domain-containing protein 83 (413 aa).

A disordered region spans residues 1–21 (MENSGKANKKDTHDGPPKEIK). Basic and acidic residues predominate over residues 8-21 (NKKDTHDGPPKEIK). 2 coiled-coil regions span residues 37–184 (EDAV…RKKI) and 216–256 (WEND…LSNC).

This chain is Coiled-coil domain-containing protein 83 (CCDC83), found in Homo sapiens (Human).